Consider the following 172-residue polypeptide: Ribosome maturation factor RimM (172 aa).

Residues 96 to 168 form the PRC barrel domain; the sequence is DGEFYYHEII…RIDVTVLEGL (73 aa).

Belongs to the RimM family. Binds ribosomal protein uS19.

Its subcellular location is the cytoplasm. In terms of biological role, an accessory protein needed during the final step in the assembly of 30S ribosomal subunit, possibly for assembly of the head region. Essential for efficient processing of 16S rRNA. May be needed both before and after RbfA during the maturation of 16S rRNA. It has affinity for free ribosomal 30S subunits but not for 70S ribosomes. The protein is Ribosome maturation factor RimM of Streptococcus mutans serotype c (strain ATCC 700610 / UA159).